A 245-amino-acid chain; its full sequence is MDKNELVQKAKLAEQAERYDDMAACMKRVTEEGGELSNEERNLLSVAYKNVVGARRSSWRVVSSIEQKTEGAEKKQEMSREYREKIEAELREICNDVLNLLDKFLIANATQPESKVFYLKMKGDYYRYLAEVAAGNAKTEIVGQSQKAYQDAFDISKTEMQPTHPIRLGLALNFSVFYYEILNCPDKACALAKAAFDEAIAELDTLSEESYKDSTLIMQLLRDNLTLWTSDTQGDEAEQGEGGEN.

This sequence belongs to the 14-3-3 family. Homodimer. As to expression, present in all adult tissues examined with the highest levels in the brain.

The protein localises to the cytoplasm. Adapter protein implicated in the regulation of a large spectrum of both general and specialized signaling pathways. Binds to a large number of partners, usually by recognition of a phosphoserine or phosphothreonine motif. Binding generally results in the modulation of the activity of the binding partner. In Xenopus laevis (African clawed frog), this protein is 14-3-3 protein zeta (ywhaz).